Reading from the N-terminus, the 138-residue chain is UPF0047 protein YjbQ (138 aa).

This sequence belongs to the UPF0047 family.

This chain is UPF0047 protein YjbQ (yjbQ), found in Escherichia coli O157:H7.